Consider the following 1024-residue polypeptide: DNA-directed RNA polymerase subunit beta (1024 aa).

Belongs to the RNA polymerase beta chain family. In plastids the minimal PEP RNA polymerase catalytic core is composed of four subunits: alpha, beta, beta', and beta''. When a (nuclear-encoded) sigma factor is associated with the core the holoenzyme is formed, which can initiate transcription (Potential).

Its subcellular location is the plastid. The protein localises to the apicoplast. The catalysed reaction is RNA(n) + a ribonucleoside 5'-triphosphate = RNA(n+1) + diphosphate. DNA-dependent RNA polymerase catalyzes the transcription of DNA into RNA using the four ribonucleoside triphosphates as substrates. This chain is DNA-directed RNA polymerase subunit beta (rpoB), found in Plasmodium falciparum (isolate 3D7).